The sequence spans 466 residues: Argininosuccinate lyase (466 aa).

This sequence belongs to the lyase 1 family. Argininosuccinate lyase subfamily.

The protein resides in the cytoplasm. It catalyses the reaction 2-(N(omega)-L-arginino)succinate = fumarate + L-arginine. It participates in amino-acid biosynthesis; L-arginine biosynthesis; L-arginine from L-ornithine and carbamoyl phosphate: step 3/3. This is Argininosuccinate lyase from Synechococcus elongatus (strain ATCC 33912 / PCC 7942 / FACHB-805) (Anacystis nidulans R2).